Consider the following 599-residue polypeptide: Retrotransposon Gag-like protein 5 (599 aa).

Disordered regions lie at residues 77–97 (DPTP…CWPP), 116–139 (DYTN…ELHS), and 377–450 (FPQE…EEDE). Positions 78–90 (PTPEEEEEEEEEV) are enriched in acidic residues. Acidic residues-rich tracts occupy residues 393–432 (DEME…EDKE) and 439–450 (DSDENKYEEEDE).

This Mus musculus (Mouse) protein is Retrotransposon Gag-like protein 5.